Here is a 237-residue protein sequence, read N- to C-terminus: Maternal B9.10 protein (237 aa).

The protein belongs to the BTG family.

The chain is Maternal B9.10 protein from Xenopus laevis (African clawed frog).